We begin with the raw amino-acid sequence, 35 residues long: Photosystem II reaction center protein Psb30 (35 aa).

Residues 7–27 form a helical membrane-spanning segment; sequence VFVQLALLALIVLAGPAVILL.

Belongs to the Psb30/Ycf12 family. PSII is composed of 1 copy each of membrane proteins PsbA, PsbB, PsbC, PsbD, PsbE, PsbF, PsbH, PsbI, PsbJ, PsbK, PsbL, PsbM, PsbT, PsbX, PsbY, PsbZ, Psb30/Ycf12, peripheral proteins PsbO, CyanoQ (PsbQ), PsbU, PsbV and a large number of cofactors. It forms dimeric complexes.

It localises to the cellular thylakoid membrane. Functionally, a core subunit of photosystem II (PSII), probably helps stabilize the reaction center. In Synechococcus sp. (strain JA-2-3B'a(2-13)) (Cyanobacteria bacterium Yellowstone B-Prime), this protein is Photosystem II reaction center protein Psb30.